We begin with the raw amino-acid sequence, 261 residues long: MFIAVLLGAYSHLETYFLRVEKYTIETEKLPKGTEIKIMNASDMHLGPVMREDRVEMVKRVYEREKPDILVATGDTVDGNMKNLDYLAQMLAELNPPLGKFAVLGNHEYYVGLNQSLDFLRKAGFRVLRGEAVEINNFLVIAGVDDSDGKRLGYRVFTDELEVLKNVDTKKYVILLKHKPRIKREAIKYVDLVLSGHTHGGVLFFVGYTILRLIFETDRGIKELAPGKYIIVSKGVGTGGPPMRLLSPPDVVIVTIKGKGN.

The a divalent metal cation site is built by Asp-43, His-45, Asp-75, Asn-106, His-197, and His-199.

It belongs to the metallophosphoesterase superfamily. The cofactor is a divalent metal cation.

This is an uncharacterized protein from Aquifex aeolicus (strain VF5).